Here is a 321-residue protein sequence, read N- to C-terminus: Lipoyl synthase (321 aa).

Residues Cys-68, Cys-73, Cys-79, Cys-94, Cys-98, Cys-101, and Ser-308 each coordinate [4Fe-4S] cluster. Residues 80–297 (FNHGTATFMI…KALADELGFT (218 aa)) enclose the Radical SAM core domain.

The protein belongs to the radical SAM superfamily. Lipoyl synthase family. Requires [4Fe-4S] cluster as cofactor.

Its subcellular location is the cytoplasm. It carries out the reaction [[Fe-S] cluster scaffold protein carrying a second [4Fe-4S](2+) cluster] + N(6)-octanoyl-L-lysyl-[protein] + 2 oxidized [2Fe-2S]-[ferredoxin] + 2 S-adenosyl-L-methionine + 4 H(+) = [[Fe-S] cluster scaffold protein] + N(6)-[(R)-dihydrolipoyl]-L-lysyl-[protein] + 4 Fe(3+) + 2 hydrogen sulfide + 2 5'-deoxyadenosine + 2 L-methionine + 2 reduced [2Fe-2S]-[ferredoxin]. Its pathway is protein modification; protein lipoylation via endogenous pathway; protein N(6)-(lipoyl)lysine from octanoyl-[acyl-carrier-protein]: step 2/2. Its function is as follows. Catalyzes the radical-mediated insertion of two sulfur atoms into the C-6 and C-8 positions of the octanoyl moiety bound to the lipoyl domains of lipoate-dependent enzymes, thereby converting the octanoylated domains into lipoylated derivatives. The chain is Lipoyl synthase from Shewanella oneidensis (strain ATCC 700550 / JCM 31522 / CIP 106686 / LMG 19005 / NCIMB 14063 / MR-1).